The primary structure comprises 1002 residues: MVVRYSLLMKVSFAILIFLVGCNENATSSNDQYLTDPDISEQTKKPSRPIIDEKNKGVTDTSVTIEWDKIECEKNFSHYNVIVYRKDRIEDVITIRTRNNSVFIDDLKPNSQYSIDVSSCLHSACSESAKIEFITLNEIDYYHTTEIEKNVYGSLEGEVRFVQTHVISPEGRKNEPEIITGRDALILFKPSIKNSSSILMKIYSEDGLTSKVVMKSPSMLPKTDQPIDIDENNKVVSYSNSYWSAEIPWNKMKSGMSLHFEDENGNLGIIESERIKFSAPSELIIQNIDLGMLYKPRGRNIVIKELERTAVDYFQKVPVSKLIFSDYTPIHFEKITLPNGTVYTEKSADIGGWHQGDMREAVGKALVSTGINNANLGIVASSGYSQQYNRLTNHITAHTNIGYYNNGVVVHGGSGGGGIVTLENTLHNEWSHELGHNYGLGHYVAGGTSHGPDTSWGWDGYYKRFIANFDWKRSPQSNIRPDNQEVVKPFMDKYTYLWDAMSGGYDHQNGIISRYTLHHPYVARIIQDWLKNGAVVINNDYMVWDELKNIYVYKGTNFKVPIKKGVPVVTILGVYDPDKINPSQLYPPTYSNYGNIFDLEKPRSESSLKGWQYVKDVNYLDRVNTHWHTMLVNRKEEKICRFSYLSPKGKKFEFLGYEDIENKICTGGRSIHYLEDGKKNPIESKYNDYFLLSIDGDGEISYVPDSTIGESKICSLKMSGTVYGAGFIKGNSCRQIDGVFMNGFQWAFTLNQSGVNSTYTWSNECVLKIKDKDNNIESISIPNYRIEKNQSNKIHLNISREKPIIDINVYCGEHELTSIKVSDNPDIKLLKGPIIVGQEHGYTSYEPKLPSGWFKHYDNFEPKNEINHELGKMRVNDNDEYICRFNFSDSDREMKFVGYVSQLSESKYICTGGSEIYYKKNEINIELSSKENDFEWLSVRDKNLVGSKIEFDNNKTLCVLDNRSFYGAGYLDENNRCTQDRQIHWSNGKQWLFSTYKTMTYH.

Positions 1–21 are cleaved as a signal peptide; it reads MVVRYSLLMKVSFAILIFLVG. The N-palmitoyl cysteine moiety is linked to residue cysteine 22. A lipid anchor (S-diacylglycerol cysteine) is attached at cysteine 22. A disordered region spans residues 31–53; it reads DQYLTDPDISEQTKKPSRPIIDE. The Fibronectin type-III domain maps to 45–139; sequence KPSRPIIDEK…KIEFITLNEI (95 aa). Residues 282-536 enclose the Peptidase M66 domain; sequence ELIIQNIDLG…QDWLKNGAVV (255 aa). Zn(2+) is bound at residue histidine 432. Glutamate 433 is a catalytic residue. Zn(2+) is bound by residues histidine 436 and histidine 442.

The cofactor is Zn(2+).

It is found in the cell membrane. In Vibrio cholerae serotype O1 (strain ATCC 39315 / El Tor Inaba N16961), this protein is ToxR-activated gene A lipoprotein (tagA).